The sequence spans 193 residues: Secreted RxLR effector protein 126 (193 aa).

Residues 1 to 20 (MRYLLAVLIAAAFVISSGTS) form the signal peptide. The short motif at 50–64 (RMLQTKAVNGLEEER) is the RxLR-dEER element.

It belongs to the RxLR effector family.

It localises to the secreted. Its subcellular location is the host membrane. In terms of biological role, secreted effector that completely suppresses the host cell death induced by cell death-inducing proteins. This is Secreted RxLR effector protein 126 from Plasmopara viticola (Downy mildew of grapevine).